A 149-amino-acid polypeptide reads, in one-letter code: Arginine repressor (149 aa).

The protein belongs to the ArgR family.

The protein localises to the cytoplasm. It participates in amino-acid biosynthesis; L-arginine biosynthesis [regulation]. Functionally, regulates arginine biosynthesis genes. This Geobacillus sp. (strain WCH70) protein is Arginine repressor.